A 473-amino-acid chain; its full sequence is MAP kinase-activated protein kinase 5 (473 aa).

Residues 22 to 304 (INWTQKLGAG…IEGVLDHPWL (283 aa)) form the Protein kinase domain. Residues 28–36 (LGAGISGPV) and lysine 51 contribute to the ATP site. The residue at position 115 (serine 115) is a Phosphoserine; by PKA. Residue aspartate 148 is the Proton acceptor of the active site. A Phosphothreonine; by MAPK11, MAPK14, MAPK4, MAPK6 and PKA modification is found at threonine 182. 2 positions are modified to phosphoserine: serine 212 and serine 354. Residues 409-440 (ENEDEKLNEVMQEAWKYNRECKLLRDTLQSFS) are a coiled coil.

Belongs to the protein kinase superfamily. CAMK Ser/Thr protein kinase family. Interacts with ERK3/MAPK6 and ERK4/MAPK4 (via FRIEDE motif); the interaction is direct. Interacts with YWHAE; the interaction prevents phosphorylation of HSP27/HSPB1 leading to disrupt F-actin polymerization. Interacts with SQSTM1. In terms of processing, phosphorylated on Thr-182 ERK3/MAPK6 or ERK4/MAPK4; which is the regulatory phosphorylation site and is located on the T-loop/loop 12, leading to activation. Phosphorylation at Thr-182 by p38-alpha/MAPK14, p38-beta/MAPK11 is subject to debate. Phosphorylated at Ser-115 by PKA/PRKACA, leading to localization to the cytoplasm. Autophosphorylated. Expressed ubiquitously.

Its subcellular location is the cytoplasm. The protein localises to the nucleus. The catalysed reaction is L-seryl-[protein] + ATP = O-phospho-L-seryl-[protein] + ADP + H(+). It catalyses the reaction L-threonyl-[protein] + ATP = O-phospho-L-threonyl-[protein] + ADP + H(+). Activated following phosphorylation at Thr-182 by p38-alpha/MAPK14, p38-beta/MAPK11, ERK2/MAPK1, ERK3/MAPK6, and ERK4/MAPK4. Activated by stress-related extracellular stimuli; such as H(2)O(2), arsenite, anisomycin TNF alpha and also PMA and the calcium ionophore A23187; but to a lesser extent. In vitro, activated by SQSTM1. Inhibited by diterpenoid alkaloid noroxoaconitine. Tumor suppressor serine/threonine-protein kinase involved in mTORC1 signaling and post-transcriptional regulation. Phosphorylates FOXO3, ERK3/MAPK6, ERK4/MAPK4, HSP27/HSPB1, p53/TP53 and RHEB. Acts as a tumor suppressor by mediating Ras-induced senescence and phosphorylating p53/TP53. Involved in post-transcriptional regulation of MYC by mediating phosphorylation of FOXO3: phosphorylation of FOXO3 leads to promote nuclear localization of FOXO3, enabling expression of miR-34b and miR-34c, 2 post-transcriptional regulators of MYC that bind to the 3'UTR of MYC transcript and prevent MYC translation. Acts as a negative regulator of mTORC1 signaling by mediating phosphorylation and inhibition of RHEB. Part of the atypical MAPK signaling via its interaction with ERK3/MAPK6 or ERK4/MAPK4: the precise role of the complex formed with ERK3/MAPK6 or ERK4/MAPK4 is still unclear, but the complex follows a complex set of phosphorylation events: upon interaction with atypical MAPK (ERK3/MAPK6 or ERK4/MAPK4), ERK3/MAPK6 (or ERK4/MAPK4) is phosphorylated and then mediates phosphorylation and activation of MAPKAPK5, which in turn phosphorylates ERK3/MAPK6 (or ERK4/MAPK4). Mediates phosphorylation of HSP27/HSPB1 in response to PKA/PRKACA stimulation, inducing F-actin rearrangement. The chain is MAP kinase-activated protein kinase 5 (MAPKAPK5) from Homo sapiens (Human).